We begin with the raw amino-acid sequence, 149 residues long: Nucleoside diphosphate kinase (149 aa).

The ATP site is built by K9, F57, R85, T91, R102, and N112. Catalysis depends on H115, which acts as the Pros-phosphohistidine intermediate.

It belongs to the NDK family. As to quaternary structure, homotetramer. Requires Mg(2+) as cofactor.

It localises to the cytoplasm. It carries out the reaction a 2'-deoxyribonucleoside 5'-diphosphate + ATP = a 2'-deoxyribonucleoside 5'-triphosphate + ADP. The enzyme catalyses a ribonucleoside 5'-diphosphate + ATP = a ribonucleoside 5'-triphosphate + ADP. In terms of biological role, major role in the synthesis of nucleoside triphosphates other than ATP. The ATP gamma phosphate is transferred to the NDP beta phosphate via a ping-pong mechanism, using a phosphorylated active-site intermediate. The polypeptide is Nucleoside diphosphate kinase (Staphylococcus aureus (strain MSSA476)).